The following is a 194-amino-acid chain: UPF0301 protein FTM_0963 (194 aa).

Belongs to the UPF0301 (AlgH) family.

This chain is UPF0301 protein FTM_0963, found in Francisella tularensis subsp. mediasiatica (strain FSC147).